A 456-amino-acid chain; its full sequence is Argininosuccinate lyase (456 aa).

The protein belongs to the lyase 1 family. Argininosuccinate lyase subfamily.

Its subcellular location is the cytoplasm. The catalysed reaction is 2-(N(omega)-L-arginino)succinate = fumarate + L-arginine. It functions in the pathway amino-acid biosynthesis; L-arginine biosynthesis; L-arginine from L-ornithine and carbamoyl phosphate: step 3/3. This chain is Argininosuccinate lyase, found in Shewanella woodyi (strain ATCC 51908 / MS32).